Here is a 589-residue protein sequence, read N- to C-terminus: Oligo-1,6-glucosidase IMA3 (589 aa).

Aspartate 215 functions as the Nucleophile in the catalytic mechanism. Catalysis depends on glutamate 277, which acts as the Proton donor.

It belongs to the glycosyl hydrolase 13 family.

The protein localises to the cytoplasm. It catalyses the reaction Hydrolysis of (1-&gt;6)-alpha-D-glucosidic linkages in some oligosaccharides produced from starch and glycogen by alpha-amylase, and in isomaltose.. In terms of biological role, alpha-glucosidase with broad substrate specificity for alpha-1,4- and alpha-1,6-glucosides. Not required for isomaltose utilization, but overexpression allows the IMA1 null mutant to grow on isomaltose. In Saccharomyces cerevisiae (strain ATCC 204508 / S288c) (Baker's yeast), this protein is Oligo-1,6-glucosidase IMA3 (IMA3).